A 442-amino-acid polypeptide reads, in one-letter code: 3-phosphoshikimate 1-carboxyvinyltransferase (442 aa).

3 residues coordinate 3-phosphoshikimate: Lys25, Ser26, and Arg30. Lys25 provides a ligand contact to phosphoenolpyruvate. Phosphoenolpyruvate is bound by residues Gly96 and Arg124. 3-phosphoshikimate-binding residues include Ser171, Ser172, Gln173, Ser203, Asp325, and Lys352. Gln173 lines the phosphoenolpyruvate pocket. Catalysis depends on Asp325, which acts as the Proton acceptor. Phosphoenolpyruvate is bound by residues Arg356, Arg400, and Lys425.

This sequence belongs to the EPSP synthase family. As to quaternary structure, monomer.

The protein localises to the cytoplasm. It carries out the reaction 3-phosphoshikimate + phosphoenolpyruvate = 5-O-(1-carboxyvinyl)-3-phosphoshikimate + phosphate. The protein operates within metabolic intermediate biosynthesis; chorismate biosynthesis; chorismate from D-erythrose 4-phosphate and phosphoenolpyruvate: step 6/7. Catalyzes the transfer of the enolpyruvyl moiety of phosphoenolpyruvate (PEP) to the 5-hydroxyl of shikimate-3-phosphate (S3P) to produce enolpyruvyl shikimate-3-phosphate and inorganic phosphate. The sequence is that of 3-phosphoshikimate 1-carboxyvinyltransferase from Bordetella bronchiseptica (strain ATCC BAA-588 / NCTC 13252 / RB50) (Alcaligenes bronchisepticus).